The following is a 68-amino-acid chain: UPF0434 protein BMA10229_A1047 (68 aa).

The protein belongs to the UPF0434 family.

This Burkholderia mallei (strain NCTC 10229) protein is UPF0434 protein BMA10229_A1047.